A 434-amino-acid polypeptide reads, in one-letter code: Methyl-coenzyme M reductase subunit beta (434 aa).

Position 365 (Tyr-365) interacts with coenzyme M. A coenzyme B-binding site is contributed by Gly-367.

This sequence belongs to the methyl-coenzyme M reductase beta subunit family. MCR is a hexamer of two alpha, two beta, and two gamma chains, forming a dimer of heterotrimers. Coenzyme F430 serves as cofactor.

Its subcellular location is the cytoplasm. The catalysed reaction is coenzyme B + methyl-coenzyme M = methane + coenzyme M-coenzyme B heterodisulfide. Its pathway is one-carbon metabolism; methyl-coenzyme M reduction; methane from methyl-coenzyme M: step 1/1. Its function is as follows. Component of the methyl-coenzyme M reductase (MCR) I that catalyzes the reductive cleavage of methyl-coenzyme M (CoM-S-CH3 or 2-(methylthio)ethanesulfonate) using coenzyme B (CoB or 7-mercaptoheptanoylthreonine phosphate) as reductant which results in the production of methane and the mixed heterodisulfide of CoB and CoM (CoM-S-S-CoB). This is the final step in methanogenesis. This is Methyl-coenzyme M reductase subunit beta (mcrB) from Methanosarcina barkeri (strain Fusaro / DSM 804).